The following is a 159-amino-acid chain: Small ribosomal subunit protein bS6 (159 aa).

Residues Sec-46 and Sec-52 are each a non-standard amino acid (selenocysteine).

Belongs to the bacterial ribosomal protein bS6 family.

Its function is as follows. Binds together with bS18 to 16S ribosomal RNA. This is Small ribosomal subunit protein bS6 from Desulfotalea psychrophila (strain LSv54 / DSM 12343).